A 955-amino-acid polypeptide reads, in one-letter code: uncharacterized protein (955 aa).

An Importin N-terminal domain is found at 23-90; the sequence is ANNYLEEFQK…RNSLLQLFLA (68 aa).

This is an uncharacterized protein from Schizosaccharomyces pombe (strain 972 / ATCC 24843) (Fission yeast).